We begin with the raw amino-acid sequence, 393 residues long: Isocitrate dehydrogenase [NAD] subunit gamma 1, mitochondrial (393 aa).

The transit peptide at 1–39 directs the protein to the mitochondrion; that stretch reads MALKVAIAAGSAAKAIFKPALLCRPWEVLAAHEAPRRSI. Threonine 120 serves as a coordination point for citrate. The residue at position 130 (serine 130) is a Phosphoserine. Asparagine 133 serves as a coordination point for citrate. Residues arginine 136 and arginine 167 each coordinate substrate. Lysine 206 bears the N6-acetyllysine mark. The residue at position 226 (lysine 226) is an N6-succinyllysine. Residue aspartate 254 coordinates substrate. Residue aspartate 254 coordinates Mn(2+). The ADP site is built by asparagine 312, threonine 313, and asparagine 324.

Belongs to the isocitrate and isopropylmalate dehydrogenases family. As to quaternary structure, heterooligomer of subunits alpha (IDH3A), beta (IDH3B), and gamma (IDH3G) in the apparent ratio of 2:1:1. The heterodimer containing one IDH3A and one IDH3B subunit and the heterodimer containing one IDH3A and one IDH3G subunit assemble into a heterotetramer (which contains two subunits of IDH3A, one of IDH3B and one of IDH3G) and further into the heterooctamer. Requires Mg(2+) as cofactor. Mn(2+) serves as cofactor.

It localises to the mitochondrion. The heterotetramer and the heterodimer composed of IDH3A and IDH3G subunits can be allosterically activated by citrate (CIT) or/and ADP, and the two activators can act independently or synergistically. The heterodimer composed of IDH3A and IDH3B subunits cannot be allosterically regulated and the allosteric regulation of the heterotetramer is through the IDH3G subunit and not the IDH3B subunit. The IDH3G subunit contains the allosteric site which consists of a CIT-binding site and an ADP-binding site, and the binding of CIT and ADP causes conformational changes at the allosteric site which are transmitted to the active site in the catalytic subunit (IDH3A) through a cascade of conformational changes at the heterodimer interface, leading to stabilization of the isocitrate-binding at the active site and thus activation of the enzyme. ATP can activate the heterotetramer and the heterodimer composed of IDH3A and IDH3G subunits at low concentrations but inhibits their activities at high concentrations, whereas ATP exhibits only inhibitory effect on the heterodimer composed of IDH3A and IDH3B subunits. Regulatory subunit which plays a role in the allosteric regulation of the enzyme catalyzing the decarboxylation of isocitrate (ICT) into alpha-ketoglutarate. The heterodimer composed of the alpha (IDH3A) and beta (IDH3B) subunits and the heterodimer composed of the alpha (IDH3A) and gamma (IDH3G) subunits, have considerable basal activity but the full activity of the heterotetramer (containing two subunits of IDH3A, one of IDH3B and one of IDH3G) requires the assembly and cooperative function of both heterodimers. In Rattus norvegicus (Rat), this protein is Isocitrate dehydrogenase [NAD] subunit gamma 1, mitochondrial (Idh3g).